A 956-amino-acid chain; its full sequence is MDLLYGLVWLLTVLLEGISGQGVYAPPTVRIVHSGLACNIEEERYSERVYTIREGETLELTCLVTGHPRPQIRWTKTAGSASDRFQDSSVFNETLRITNIQRHQGGRYYCKAENGLGSPAIKSIRVDVYYLDDPVVTVHQSIGEAKEQFYYERTVFLRCVANSNPPVRYSWRRGQEVLLQGSDKGVEIYEPFFTQGETKILKLKNLRPQDYANYSCIASVRNVCNIPDKMVSFRLSNKTASPSIKLLVDDPIVVNPGEAITLVCVTTGGEPAPSLTWVRSFGTLPEKTVLNGGTLTIPAITSDDAGTYSCIANNNVGNPAKKSTNIIVRALKKGRFWITPDPYHKDDNIQIGREVKISCQVEAVPSEELTFSWFKNGRPLRSSERMVITQTDPDVSPGTTNLDIIDLKFTDFGTYTCVASLKGGGISDISIDVNISSSTVPPNLTVPQEKSPLVTREGDTIELQCQVTGKPKPIILWSRADKEVAMPDGSMQMESYDGTLRIVNVSREMSGMYRCQTSQYNGFNVKPREALVQLIVQYPPAVEPAFLEIRQGQDRSVTMSCRVLRAYPIRVLTYEWRLGNKLLRTGQFDSQEYTEYAVKSLSNENYGVYNCSIINEAGAGRCSFLVTGKAYAPEFYYDTYNPVWQNRHRVYSYSLQWTQMNPDAVDRIVAYRLGIRQAGQQRWWEQEIKINGNIQKGELITYNLTELIKPEAYEVRLTPLTKFGEGDSTIRVIKYSAPVNPHLREFHCGFEDGNICLFTQDDTDNFDWTKQSTATRNTKYTPNTGPNADRSGSKEGFYMYIETSRPRLEGEKARLLSPVFSIAPKNPYGPTNTAYCFSFFYHMYGQHIGVLNVYLRLKGQTTIENPLWSSSGNKGQRWNEAHVNIYPITSFQLIFEGIRGPGIEGDIAIDDVSIAEGECAKQDLATKNSVDGAVGILVHIWLFPIIVLISILSPRR.

The N-terminal stretch at 1 to 25 (MDLLYGLVWLLTVLLEGISGQGVYA) is a signal peptide. 2 Ig-like domains span residues 27-127 (PTVR…IRVD) and 134-232 (PVVT…KMVS). 2 disulfides stabilise this stretch: Cys-62–Cys-110 and Cys-159–Cys-216. 3 N-linked (GlcNAc...) asparagine glycosylation sites follow: Asn-92, Asn-213, and Asn-237. Ig-like domains follow at residues 242–328 (PSIK…NIIV), 340–436 (PDPY…VNIS), 442–533 (PNLT…ALVQ), and 540–627 (PAVE…FLVT). Intrachain disulfides connect Cys-264-Cys-310 and Cys-359-Cys-417. N-linked (GlcNAc...) asparagine glycosylation is found at Asn-434, Asn-443, Asn-504, Asn-610, and Asn-703. 2 disulfides stabilise this stretch: Cys-465/Cys-515 and Cys-561/Cys-611. The Fibronectin type-III domain occupies 638–739 (DTYNPVWQNR…IRVIKYSAPV (102 aa)). Residues 746–921 (FHCGFEDGNI…VSIAEGECAK (176 aa)) enclose the MAM domain. The GPI-anchor amidated aspartate moiety is linked to residue Asp-931. Positions 932 to 956 (GAVGILVHIWLFPIIVLISILSPRR) are cleaved as a propeptide — removed in mature form.

As to quaternary structure, interacts (through the Ig-like domains) with NLGN2. Detected in Leydig cells, syncytiotrophoblast, duodenal villi epithelial cells and neutrophils from kidney and cutaneous squamous cell carcinoma (at protein level).

It is found in the cell membrane. In terms of biological role, may be involved in cell-cell interactions. In Homo sapiens (Human), this protein is MAM domain-containing glycosylphosphatidylinositol anchor protein 2 (MDGA2).